Here is an 881-residue protein sequence, read N- to C-terminus: Alanine--tRNA ligase (881 aa).

4 residues coordinate Zn(2+): histidine 566, histidine 570, cysteine 668, and histidine 672.

This sequence belongs to the class-II aminoacyl-tRNA synthetase family. Requires Zn(2+) as cofactor.

The protein localises to the cytoplasm. It carries out the reaction tRNA(Ala) + L-alanine + ATP = L-alanyl-tRNA(Ala) + AMP + diphosphate. Catalyzes the attachment of alanine to tRNA(Ala) in a two-step reaction: alanine is first activated by ATP to form Ala-AMP and then transferred to the acceptor end of tRNA(Ala). Also edits incorrectly charged Ser-tRNA(Ala) and Gly-tRNA(Ala) via its editing domain. This chain is Alanine--tRNA ligase, found in Frankia casuarinae (strain DSM 45818 / CECT 9043 / HFP020203 / CcI3).